We begin with the raw amino-acid sequence, 221 residues long: Vesicle-associated membrane protein 714 (221 aa).

Ala-2 is subject to N-acetylalanine. The Cytoplasmic segment spans residues 2 to 190; that stretch reads AIVYAVVARG…RRALWMKNAK (189 aa). A Longin domain is found at 7-112; the sequence is VVARGTVVLA…AMNDEFSRVL (106 aa). The v-SNARE coiled-coil homology domain occupies 127 to 187; sequence TLNRVRGEVS…KRLRRALWMK (61 aa). A helical; Anchor for type IV membrane protein transmembrane segment spans residues 191 to 211; that stretch reads LLVLLTCLIVFLLYIIIASFC. Topologically, residues 212–221 are vesicular; that stretch reads GGITLPSCRS.

It belongs to the synaptobrevin family. Highly expressed in leaves, stems and roots. Detected in flowers.

It is found in the golgi apparatus membrane. Involved in the targeting and/or fusion of transport vesicles to their target membrane. The sequence is that of Vesicle-associated membrane protein 714 from Arabidopsis thaliana (Mouse-ear cress).